We begin with the raw amino-acid sequence, 240 residues long: Keratinocyte-associated protein 3 (240 aa).

4 consecutive transmembrane segments (helical) span residues valine 21–glycine 41, valine 63–serine 83, valine 94–leucine 114, and alanine 163–tyrosine 183.

Belongs to the TMEM54 family. In terms of tissue distribution, expressed in skin, pancreas and keratinocytes.

It localises to the membrane. This Homo sapiens (Human) protein is Keratinocyte-associated protein 3 (KRTCAP3).